The primary structure comprises 153 residues: Large ribosomal subunit protein uL13 (153 aa).

Residues 134–153 (EAQQPQALDVGSLNRKNVSA) are disordered.

Belongs to the universal ribosomal protein uL13 family. As to quaternary structure, part of the 50S ribosomal subunit.

Its function is as follows. This protein is one of the early assembly proteins of the 50S ribosomal subunit, although it is not seen to bind rRNA by itself. It is important during the early stages of 50S assembly. The protein is Large ribosomal subunit protein uL13 of Methylorubrum extorquens (strain CM4 / NCIMB 13688) (Methylobacterium extorquens).